The sequence spans 246 residues: 4'-phosphopantetheinyl transferase Svp (246 aa).

The segment covering A223 to G232 has biased composition (low complexity). The segment at A223–P246 is disordered. A compositionally biased stretch (basic and acidic residues) spans A233–P246.

This sequence belongs to the P-Pant transferase superfamily. Gsp/Sfp/HetI/AcpT family.

The enzyme catalyses apo-[ACP] + CoA = holo-[ACP] + adenosine 3',5'-bisphosphate + H(+). Transfers the 4'-phosphopantetheine moiety from coenzyme A to a Ser of an acyl-carrier-protein. The enzyme is able to transfer the cofactor to a broad range of enzymes with acyl- or peptidyl-carrier protein domains. The protein is 4'-phosphopantetheinyl transferase Svp (svp) of Streptomyces mobaraensis (Streptoverticillium mobaraense).